A 207-amino-acid polypeptide reads, in one-letter code: Guanylate kinase (207 aa).

The Guanylate kinase-like domain occupies 6–185 (GLLIVLSGPS…AKNRIQCIVE (180 aa)). 13–20 (GPSGVGKG) lines the ATP pocket.

This sequence belongs to the guanylate kinase family.

It localises to the cytoplasm. It carries out the reaction GMP + ATP = GDP + ADP. Essential for recycling GMP and indirectly, cGMP. In Staphylococcus aureus (strain Mu50 / ATCC 700699), this protein is Guanylate kinase.